The primary structure comprises 625 residues: Mitochondrial Rho GTPase 1 (625 aa).

Topologically, residues 1–601 (MSDDETLADV…LRRVFYLNDS (601 aa)) are cytoplasmic. Residues 3–170 (DDETLADVRI…EIFYYAQKAV (168 aa)) enclose the Miro 1 domain. GTP is bound by residues 16 to 23 (GDEGCGKT), 62 to 66 (DLSIK), and 123 to 126 (NKSD). EF-hand domains lie at 188 to 223 (RARK…CFGI) and 308 to 343 (EGVQ…CPVP). Positions 201, 203, 205, 207, 212, 321, 323, 325, 327, and 332 each coordinate Ca(2+). In terms of domain architecture, Miro 2 spans 420 to 625 (HGTDRKVFQC…LAGFLVLKNL (206 aa)). GTP is bound by residues 433-440 (GAKDAGKT), 470-474 (RVKEE), and 537-540 (TKVE). A helical; Anchor for type IV membrane protein transmembrane segment spans residues 602–622 (NLLSKITFGAAIVALAGFLVL). Residues 623-625 (KNL) lie on the Mitochondrial intermembrane side of the membrane.

This sequence belongs to the mitochondrial Rho GTPase family.

The protein resides in the mitochondrion outer membrane. Mitochondrial GTPase involved in mitochondrial trafficking. Probably involved in control of anterograde transport of mitochondria and their subcellular distribution. Plays a role in maintaining mitochondrial morphology. The protein is Mitochondrial Rho GTPase 1 of Caenorhabditis elegans.